Consider the following 291-residue polypeptide: N-acetylmannosamine kinase (291 aa).

ATP contacts are provided by residues 5–12 (AIDIGGTK) and 132–139 (GVGGGVVS). 4 residues coordinate Zn(2+): His156, Cys166, Cys168, and Cys173.

Belongs to the ROK (NagC/XylR) family. NanK subfamily. As to quaternary structure, homodimer.

It catalyses the reaction an N-acyl-D-mannosamine + ATP = an N-acyl-D-mannosamine 6-phosphate + ADP + H(+). The protein operates within amino-sugar metabolism; N-acetylneuraminate degradation; D-fructose 6-phosphate from N-acetylneuraminate: step 2/5. In terms of biological role, catalyzes the phosphorylation of N-acetylmannosamine (ManNAc) to ManNAc-6-P. The chain is N-acetylmannosamine kinase from Escherichia coli O127:H6 (strain E2348/69 / EPEC).